A 268-amino-acid polypeptide reads, in one-letter code: uncharacterized protein (268 aa).

An RING-type; degenerate zinc finger spans residues Cys-21–Lys-61.

It is found in the mitochondrion. It localises to the nucleus. This is an uncharacterized protein from Schizosaccharomyces pombe (strain 972 / ATCC 24843) (Fission yeast).